The chain runs to 256 residues: Adenosylcobinamide-GDP ribazoletransferase (256 aa).

The next 6 membrane-spanning stretches (helical) occupy residues 40-60 (YFPLIGWLVGAVAAAVYWLVL), 64-84 (PAQGVAVAVSMGATLLLTGAF), 114-134 (IGAFGAIAVCMALLLKWQLLS), 143-163 (ILVAMVAAHAASRAAAVSHLL), 194-214 (VVPLLWFGPMCAALIVVGLIL), and 234-254 (CLGMAQQIFELLILWGLLAWM).

This sequence belongs to the CobS family. Mg(2+) is required as a cofactor.

It is found in the cell inner membrane. It carries out the reaction alpha-ribazole + adenosylcob(III)inamide-GDP = adenosylcob(III)alamin + GMP + H(+). The catalysed reaction is alpha-ribazole 5'-phosphate + adenosylcob(III)inamide-GDP = adenosylcob(III)alamin 5'-phosphate + GMP + H(+). The protein operates within cofactor biosynthesis; adenosylcobalamin biosynthesis; adenosylcobalamin from cob(II)yrinate a,c-diamide: step 7/7. Functionally, joins adenosylcobinamide-GDP and alpha-ribazole to generate adenosylcobalamin (Ado-cobalamin). Also synthesizes adenosylcobalamin 5'-phosphate from adenosylcobinamide-GDP and alpha-ribazole 5'-phosphate. This Ralstonia pickettii (strain 12J) protein is Adenosylcobinamide-GDP ribazoletransferase.